A 253-amino-acid polypeptide reads, in one-letter code: Triosephosphate isomerase (253 aa).

Residue 8–10 participates in substrate binding; sequence NWK. The active-site Electrophile is histidine 93. The active-site Proton acceptor is the glutamate 165. Substrate contacts are provided by residues glycine 171, serine 210, and 231-232; that span reads GG.

Belongs to the triosephosphate isomerase family. As to quaternary structure, homodimer.

The protein localises to the cytoplasm. It carries out the reaction D-glyceraldehyde 3-phosphate = dihydroxyacetone phosphate. The protein operates within carbohydrate biosynthesis; gluconeogenesis. It functions in the pathway carbohydrate degradation; glycolysis; D-glyceraldehyde 3-phosphate from glycerone phosphate: step 1/1. Its function is as follows. Involved in the gluconeogenesis. Catalyzes stereospecifically the conversion of dihydroxyacetone phosphate (DHAP) to D-glyceraldehyde-3-phosphate (G3P). The sequence is that of Triosephosphate isomerase from Francisella tularensis subsp. tularensis (strain FSC 198).